Consider the following 307-residue polypeptide: Methionyl-tRNA formyltransferase (307 aa).

(6S)-5,6,7,8-tetrahydrofolate is bound at residue 108 to 111 (SLLP).

Belongs to the Fmt family.

It carries out the reaction L-methionyl-tRNA(fMet) + (6R)-10-formyltetrahydrofolate = N-formyl-L-methionyl-tRNA(fMet) + (6S)-5,6,7,8-tetrahydrofolate + H(+). Attaches a formyl group to the free amino group of methionyl-tRNA(fMet). The formyl group appears to play a dual role in the initiator identity of N-formylmethionyl-tRNA by promoting its recognition by IF2 and preventing the misappropriation of this tRNA by the elongation apparatus. The protein is Methionyl-tRNA formyltransferase of Xylella fastidiosa (strain M12).